A 199-amino-acid polypeptide reads, in one-letter code: Interleukin-11 (199 aa).

The signal sequence occupies residues 1–21; the sequence is MNCVCRLVLVVLSLWPDTAVA. Positions 182–190 are important for interaction with IL11RA and for the stimulation of cell proliferation; it reads HLTLDWAVR.

Belongs to the IL-6 superfamily. In terms of assembly, interacts with IL11RA to associate with IL6ST, giving rise to a multimeric signaling complex.

It localises to the secreted. Cytokine that stimulates the proliferation of hematopoietic stem cells and megakaryocyte progenitor cells and induces megakaryocyte maturation resulting in increased platelet production. Also promotes the proliferation of hepatocytes in response to liver damage. Binding to its receptor formed by IL6ST and IL11RA activates a signaling cascade that promotes cell proliferation. Signaling leads to the activation of intracellular protein kinases and the phosphorylation of STAT3. The interaction with the membrane-bound IL11RA and IL6ST stimulates 'classic signaling', whereas the binding of IL11 and soluble IL11RA to IL6ST stimulates 'trans-signaling'. The polypeptide is Interleukin-11 (IL11) (Macaca fascicularis (Crab-eating macaque)).